A 474-amino-acid chain; its full sequence is 15-cis-phytoene desaturase (474 aa).

It belongs to the carotenoid/retinoid oxidoreductase family.

It is found in the cell membrane. The enzyme catalyses 2 a plastoquinone + 15-cis-phytoene = 9,9',15-tri-cis-zeta-carotene + 2 a plastoquinol. It functions in the pathway carotenoid biosynthesis; lycopene biosynthesis. With respect to regulation, inhibited by the herbicide norflurazon in a non-competitive way. Functionally, this enzyme converts phytoene into zeta-carotene via the intermediary of phytofluene by the symmetrical introduction of two double bonds at the C-11 and C-11' positions of phytoene. Also active with phytofluene and 1,2-epoxyphytoene as substrates. This chain is 15-cis-phytoene desaturase (pds), found in Synechococcus elongatus (strain ATCC 33912 / PCC 7942 / FACHB-805) (Anacystis nidulans R2).